A 235-amino-acid chain; its full sequence is 1-(5-phosphoribosyl)-5-[(5-phosphoribosylamino)methylideneamino] imidazole-4-carboxamide isomerase (235 aa).

Residue Asp-8 is the Proton acceptor of the active site. Catalysis depends on Asp-128, which acts as the Proton donor.

Belongs to the HisA/HisF family.

It is found in the cytoplasm. The enzyme catalyses 1-(5-phospho-beta-D-ribosyl)-5-[(5-phospho-beta-D-ribosylamino)methylideneamino]imidazole-4-carboxamide = 5-[(5-phospho-1-deoxy-D-ribulos-1-ylimino)methylamino]-1-(5-phospho-beta-D-ribosyl)imidazole-4-carboxamide. The protein operates within amino-acid biosynthesis; L-histidine biosynthesis; L-histidine from 5-phospho-alpha-D-ribose 1-diphosphate: step 4/9. The chain is 1-(5-phosphoribosyl)-5-[(5-phosphoribosylamino)methylideneamino] imidazole-4-carboxamide isomerase from Thermus thermophilus (strain ATCC 27634 / DSM 579 / HB8).